A 103-amino-acid polypeptide reads, in one-letter code: Large ribosomal subunit protein bL32m (103 aa).

A mitochondrion-targeting transit peptide spans 1–47; sequence MALLRGNSLAISQKMLSVFQASALPHISLRIFISPPSIANIWNSILL. Zn(2+) contacts are provided by C77, C80, C90, and C93.

The protein belongs to the bacterial ribosomal protein bL32 family. In terms of assembly, component of the mitochondrial large ribosomal subunit (mt-LSU). Mature yeast 74S mitochondrial ribosomes consist of a small (37S) and a large (54S) subunit. The 37S small subunit contains a 15S ribosomal RNA (15S mt-rRNA) and at least 32 different proteins. The 54S large subunit contains a 21S rRNA (21S mt-rRNA) and at least 45 different proteins. bL32m has a zinc binding site. In terms of processing, MRPL32 precursor is processed by the m-AAA protease, which cleaves the N-terminal transit peptide. Cleavage by the m-AAA protease takes place prior to assembly into the large subunit, an essential step for mitochondrial ribosome (mitoribosome) assembly. Proper processing by the m-AAA protease is dependent on the zinc-binding region within the tightly folded C-terminal domain of MRPL32: zinc-dependent folding halts degradation initiated from the N-terminus and triggers the release of mature mrpl32.

It is found in the mitochondrion. Its function is as follows. Component of the mitochondrial ribosome (mitoribosome), a dedicated translation machinery responsible for the synthesis of mitochondrial genome-encoded proteins, including at least some of the essential transmembrane subunits of the mitochondrial respiratory chain. The mitoribosomes are attached to the mitochondrial inner membrane and translation products are cotranslationally integrated into the membrane. This is Large ribosomal subunit protein bL32m (mrpl32) from Schizosaccharomyces pombe (strain 972 / ATCC 24843) (Fission yeast).